Here is a 259-residue protein sequence, read N- to C-terminus: Deoxyribose-phosphate aldolase (259 aa).

Residue aspartate 102 is the Proton donor/acceptor of the active site. Lysine 167 functions as the Schiff-base intermediate with acetaldehyde in the catalytic mechanism. The Proton donor/acceptor role is filled by lysine 201.

The protein belongs to the DeoC/FbaB aldolase family. DeoC type 2 subfamily.

It is found in the cytoplasm. It catalyses the reaction 2-deoxy-D-ribose 5-phosphate = D-glyceraldehyde 3-phosphate + acetaldehyde. It participates in carbohydrate degradation; 2-deoxy-D-ribose 1-phosphate degradation; D-glyceraldehyde 3-phosphate and acetaldehyde from 2-deoxy-alpha-D-ribose 1-phosphate: step 2/2. In terms of biological role, catalyzes a reversible aldol reaction between acetaldehyde and D-glyceraldehyde 3-phosphate to generate 2-deoxy-D-ribose 5-phosphate. The chain is Deoxyribose-phosphate aldolase from Escherichia coli O1:K1 / APEC.